The primary structure comprises 395 residues: Probable FMNH2-dependent monooxygenase SfnC (395 aa).

Its function is as follows. Involved in the dimethyl sulfide degradation pathway. The polypeptide is Probable FMNH2-dependent monooxygenase SfnC (Pseudomonas putida (Arthrobacter siderocapsulatus)).